The primary structure comprises 104 residues: Small ribosomal subunit protein uS10 (104 aa).

This sequence belongs to the universal ribosomal protein uS10 family. In terms of assembly, part of the 30S ribosomal subunit.

Involved in the binding of tRNA to the ribosomes. This chain is Small ribosomal subunit protein uS10, found in Thermoplasma acidophilum (strain ATCC 25905 / DSM 1728 / JCM 9062 / NBRC 15155 / AMRC-C165).